Consider the following 295-residue polypeptide: Acetylglutamate kinase (295 aa).

Substrate is bound by residues 66–67, arginine 88, and asparagine 193; that span reads GG.

This sequence belongs to the acetylglutamate kinase family. ArgB subfamily.

The protein localises to the cytoplasm. The enzyme catalyses N-acetyl-L-glutamate + ATP = N-acetyl-L-glutamyl 5-phosphate + ADP. Its pathway is amino-acid biosynthesis; L-arginine biosynthesis; N(2)-acetyl-L-ornithine from L-glutamate: step 2/4. Its function is as follows. Catalyzes the ATP-dependent phosphorylation of N-acetyl-L-glutamate. This is Acetylglutamate kinase from Rhizobium etli (strain CIAT 652).